A 313-amino-acid chain; its full sequence is Postacrosomal sheath WW domain-binding protein (313 aa).

Residues 8–87 enclose the GRAM domain; sequence TESRRGALIP…GLMSDCTIEQ (80 aa). Repeat copies occupy residues 179–185, 193–199, 207–213, 214–220, 221–227, 228–234, 235–241, 242–248, 249–255, 256–262, 263–269, and 270–276. Positions 179–276 are 12 X 7 AA tandem repeat of Y-G-X-P-P-X-G; it reads YGPPPPGYTV…PAGYGAPPAG (98 aa). Residues 183–186 carry the PPxY motif 1 motif; it reads PPGY. A compositionally biased stretch (gly residues) spans 254–264; the sequence is GGYGAPPGGYG. Residues 254 to 313 are disordered; sequence GGYGAPPGGYGAPPAGYGAPPAGNEALPPAYEAPSAGNTAASHRSMTAQQETSLPTTSSS. Residues 265-276 show a composition bias toward low complexity; sequence APPAGYGAPPAG. Positions 281-284 match the PPxY motif 2 motif; the sequence is PPAY. Residues 289–313 are compositionally biased toward polar residues; it reads AGNTAASHRSMTAQQETSLPTTSSS.

Expressed in testis.

Its function is as follows. May play a role in meiotic resumption and pronuclear formation, mediated by a WW domain-signaling pathway during fertilization. The chain is Postacrosomal sheath WW domain-binding protein (WBP2NL) from Bos taurus (Bovine).